A 268-amino-acid polypeptide reads, in one-letter code: Shikimate dehydrogenase (NADP(+)) (268 aa).

Shikimate is bound by residues 13–15 (SLS) and Thr60. Residue Lys64 is the Proton acceptor of the active site. Glu76 contributes to the NADP(+) binding site. Shikimate is bound by residues Asn85 and Asp100. Residues 124–128 (GAGGA), 148–153 (NRTMAR), and Ile209 contribute to the NADP(+) site. Tyr211 is a shikimate binding site. Gly232 provides a ligand contact to NADP(+).

This sequence belongs to the shikimate dehydrogenase family. In terms of assembly, homodimer.

It catalyses the reaction shikimate + NADP(+) = 3-dehydroshikimate + NADPH + H(+). It functions in the pathway metabolic intermediate biosynthesis; chorismate biosynthesis; chorismate from D-erythrose 4-phosphate and phosphoenolpyruvate: step 4/7. Its function is as follows. Involved in the biosynthesis of the chorismate, which leads to the biosynthesis of aromatic amino acids. Catalyzes the reversible NADPH linked reduction of 3-dehydroshikimate (DHSA) to yield shikimate (SA). In Staphylococcus aureus (strain JH1), this protein is Shikimate dehydrogenase (NADP(+)).